Consider the following 296-residue polypeptide: uncharacterized protein (296 aa).

A signal peptide spans 1-20; sequence MKKALGILAILLILVGGYFA.

This is an uncharacterized protein from Aquifex aeolicus (strain VF5).